The following is a 401-amino-acid chain: 8-amino-7-oxononanoate synthase (401 aa).

Arg24 is a binding site for substrate. Position 111-112 (111-112) interacts with pyridoxal 5'-phosphate; that stretch reads GF. His137 provides a ligand contact to substrate. Positions 183, 211, and 240 each coordinate pyridoxal 5'-phosphate. At Lys243 the chain carries N6-(pyridoxal phosphate)lysine. Residue Thr357 participates in substrate binding.

Belongs to the class-II pyridoxal-phosphate-dependent aminotransferase family. BioF subfamily. As to quaternary structure, homodimer. Pyridoxal 5'-phosphate serves as cofactor.

It catalyses the reaction 6-carboxyhexanoyl-[ACP] + L-alanine + H(+) = (8S)-8-amino-7-oxononanoate + holo-[ACP] + CO2. Its pathway is cofactor biosynthesis; biotin biosynthesis. Functionally, catalyzes the decarboxylative condensation of pimeloyl-[acyl-carrier protein] and L-alanine to produce 8-amino-7-oxononanoate (AON), [acyl-carrier protein], and carbon dioxide. This chain is 8-amino-7-oxononanoate synthase, found in Xanthomonas axonopodis pv. citri (strain 306).